Reading from the N-terminus, the 72-residue chain is Large ribosomal subunit protein bL31 (72 aa).

Zn(2+) is bound by residues Cys-16, Cys-18, Cys-37, and Cys-40.

The protein belongs to the bacterial ribosomal protein bL31 family. Type A subfamily. In terms of assembly, part of the 50S ribosomal subunit. Zn(2+) serves as cofactor.

In terms of biological role, binds the 23S rRNA. This is Large ribosomal subunit protein bL31 from Buchnera aphidicola subsp. Acyrthosiphon pisum (strain Tuc7).